The primary structure comprises 352 residues: UDP-N-acetylglucosamine--N-acetylmuramyl-(pentapeptide) pyrophosphoryl-undecaprenol N-acetylglucosamine transferase (352 aa).

Residues Ser-195 and Gln-287 each coordinate UDP-N-acetyl-alpha-D-glucosamine.

The protein belongs to the glycosyltransferase 28 family. MurG subfamily.

It localises to the cell membrane. The catalysed reaction is Mur2Ac(oyl-L-Ala-gamma-D-Glu-L-Lys-D-Ala-D-Ala)-di-trans,octa-cis-undecaprenyl diphosphate + UDP-N-acetyl-alpha-D-glucosamine = beta-D-GlcNAc-(1-&gt;4)-Mur2Ac(oyl-L-Ala-gamma-D-Glu-L-Lys-D-Ala-D-Ala)-di-trans,octa-cis-undecaprenyl diphosphate + UDP + H(+). It participates in cell wall biogenesis; peptidoglycan biosynthesis. Cell wall formation. Catalyzes the transfer of a GlcNAc subunit on undecaprenyl-pyrophosphoryl-MurNAc-pentapeptide (lipid intermediate I) to form undecaprenyl-pyrophosphoryl-MurNAc-(pentapeptide)GlcNAc (lipid intermediate II). The protein is UDP-N-acetylglucosamine--N-acetylmuramyl-(pentapeptide) pyrophosphoryl-undecaprenol N-acetylglucosamine transferase of Streptococcus pneumoniae (strain CGSP14).